Here is a 255-residue protein sequence, read N- to C-terminus: Coniferyl-alcohol dehydrogenase (255 aa).

Residues 12 to 17 (GVSSGI), D36, 51 to 52 (DL), and G77 contribute to the NAD(+) site. S117 contributes to the substrate binding site. Positions 157 and 161 each coordinate NAD(+). The active-site Proton acceptor is Y157.

This sequence belongs to the short-chain dehydrogenases/reductases (SDR) family.

The catalysed reaction is (E)-coniferol + NADP(+) = (E)-coniferaldehyde + NADPH + H(+). In terms of biological role, catalyzes the conversion of coniferyl alcohol into coniferyl aldehyde in the eugenol degradation pathway. Specific for coniferyl alcohol; does not act on cinnamyl alcohol, 4-coumaryl alcohol or sinapyl alcohol. The polypeptide is Coniferyl-alcohol dehydrogenase (calA) (Pseudomonas sp. (strain HR199 / DSM 7063)).